Here is a 1002-residue protein sequence, read N- to C-terminus: Copper-transporting ATPase HMA5 (1002 aa).

A compositionally biased stretch (low complexity) spans 32 to 48; the sequence is RPRYPSMPRRPRSAAVA. The disordered stretch occupies residues 32 to 63; sequence RPRYPSMPRRPRSAAVAGEGGEGGGGGGDGDL. Residues 49–60 show a composition bias toward gly residues; that stretch reads GEGGEGGGGGGD. HMA domains are found at residues 75-141, 153-219, and 228-294; these read KVAV…FEAK, LVCR…FEAI, and SRID…SGDL. The Cu(+) site is built by cysteine 86, cysteine 89, cysteine 164, and cysteine 167. Helical transmembrane passes span 320–340, 354–374, 392–412, 425–445, 585–605, 624–644, 943–963, and 972–992; these read FLWSLVFTIPVFLTSMVFMYI, MMSIGELLRWILSTPVQFVIG, MDVLIALGTNTAYFYSVYSIL, FFETSSMLISFILLGKYLEIL, VFVPLVIILSLLTWLAWFLAG, LALQFGISVMVIACPCALGLA, YVWALGYNIIGIPIAAGVLFP, and WVAGAAMAASSVSVVCWSLLL.

Belongs to the cation transport ATPase (P-type) (TC 3.A.3) family. Type IB subfamily. In terms of tissue distribution, expressed in root pericycle cells, xylem region of diffuse vascular bundles in the first node, and vascular tissues of peduncle, rachis and husk.

The protein localises to the cell membrane. The enzyme catalyses Cu(+)(in) + ATP + H2O = Cu(+)(out) + ADP + phosphate + H(+). Copper (Cu) transporter that plays an essential role in promoting translocation of Cu from roots to shoots. Involved in loading Cu to the xylem of the roots and other organs, including panicles. This Oryza sativa subsp. japonica (Rice) protein is Copper-transporting ATPase HMA5.